A 313-amino-acid chain; its full sequence is Solute carrier family 35 member E3 (313 aa).

Helical transmembrane passes span 17-37 (GLLF…WIYV), 40-60 (GFPN…GLYI), 77-97 (LLLL…SLQN), 126-143 (FSTR…GVIL), 153-173 (FLGM…QVWV), 187-206 (LLYY…VPFF), 225-245 (LMVL…YWII), 252-272 (TYNM…YVLF), and 275-295 (PLSI…LAYT).

The protein belongs to the TPT transporter family. SLC35E subfamily.

It localises to the membrane. In terms of biological role, putative transporter. This is Solute carrier family 35 member E3 (SLC35E3) from Homo sapiens (Human).